Reading from the N-terminus, the 102-residue chain is Small ribosomal subunit protein uS10 (102 aa).

Belongs to the universal ribosomal protein uS10 family. In terms of assembly, part of the 30S ribosomal subunit.

Functionally, involved in the binding of tRNA to the ribosomes. This chain is Small ribosomal subunit protein uS10, found in Dehalococcoides mccartyi (strain ATCC BAA-2100 / JCM 16839 / KCTC 5957 / BAV1).